The chain runs to 245 residues: ATP synthase subunit b (245 aa).

A helical transmembrane segment spans residues 3-23 (SFNLLTIVSSIVNLLALAWII).

It belongs to the ATPase B chain family. F-type ATPases have 2 components, F(1) - the catalytic core - and F(0) - the membrane proton channel. F(1) has five subunits: alpha(3), beta(3), gamma(1), delta(1), epsilon(1). F(0) has three main subunits: a(1), b(2) and c(10-14). The alpha and beta chains form an alternating ring which encloses part of the gamma chain. F(1) is attached to F(0) by a central stalk formed by the gamma and epsilon chains, while a peripheral stalk is formed by the delta and b chains.

The protein resides in the cell inner membrane. Functionally, f(1)F(0) ATP synthase produces ATP from ADP in the presence of a proton or sodium gradient. F-type ATPases consist of two structural domains, F(1) containing the extramembraneous catalytic core and F(0) containing the membrane proton channel, linked together by a central stalk and a peripheral stalk. During catalysis, ATP synthesis in the catalytic domain of F(1) is coupled via a rotary mechanism of the central stalk subunits to proton translocation. Component of the F(0) channel, it forms part of the peripheral stalk, linking F(1) to F(0). This is ATP synthase subunit b from Dictyoglomus thermophilum (strain ATCC 35947 / DSM 3960 / H-6-12).